The following is a 483-amino-acid chain: Isocitrate dehydrogenase [NADP] (483 aa).

An NADP(+)-binding site is contributed by Thr-74. Ser-83, Asn-85, Arg-89, Arg-99, and Arg-121 together coordinate D-threo-isocitrate. Residue Asp-232 participates in Mg(2+) binding. NADP(+) is bound by residues 264 to 270 (HGSAPDI) and Asn-277.

Belongs to the isocitrate and isopropylmalate dehydrogenases family. Homodimer. Mg(2+) serves as cofactor. It depends on Mn(2+) as a cofactor.

The catalysed reaction is D-threo-isocitrate + NADP(+) = 2-oxoglutarate + CO2 + NADPH. Functionally, catalyzes the oxidative decarboxylation of isocitrate to 2-oxoglutarate and carbon dioxide with the concomitant reduction of NADP(+). The polypeptide is Isocitrate dehydrogenase [NADP] (icd) (Rickettsia felis (strain ATCC VR-1525 / URRWXCal2) (Rickettsia azadi)).